A 29-amino-acid polypeptide reads, in one-letter code: Cytochrome b6-f complex subunit 8 (29 aa).

The helical transmembrane segment at 3-23 (IVSLAWAVLMVVFTFSLSLVV) threads the bilayer.

It belongs to the PetN family. The 4 large subunits of the cytochrome b6-f complex are cytochrome b6, subunit IV (17 kDa polypeptide, PetD), cytochrome f and the Rieske protein, while the 4 small subunits are PetG, PetL, PetM and PetN. The complex functions as a dimer.

It localises to the plastid. Its subcellular location is the chloroplast thylakoid membrane. Its function is as follows. Component of the cytochrome b6-f complex, which mediates electron transfer between photosystem II (PSII) and photosystem I (PSI), cyclic electron flow around PSI, and state transitions. The chain is Cytochrome b6-f complex subunit 8 from Drimys granadensis.